We begin with the raw amino-acid sequence, 207 residues long: Protein-L-isoaspartate O-methyltransferase (207 aa).

The active site involves serine 56.

Belongs to the methyltransferase superfamily. L-isoaspartyl/D-aspartyl protein methyltransferase family.

The protein localises to the cytoplasm. It carries out the reaction [protein]-L-isoaspartate + S-adenosyl-L-methionine = [protein]-L-isoaspartate alpha-methyl ester + S-adenosyl-L-homocysteine. Its function is as follows. Catalyzes the methyl esterification of L-isoaspartyl residues in peptides and proteins that result from spontaneous decomposition of normal L-aspartyl and L-asparaginyl residues. It plays a role in the repair and/or degradation of damaged proteins. This chain is Protein-L-isoaspartate O-methyltransferase, found in Pyrobaculum islandicum (strain DSM 4184 / JCM 9189 / GEO3).